The following is a 316-amino-acid chain: Glutathione synthetase (316 aa).

One can recognise an ATP-grasp domain in the interval 124 to 311; it reads NEKLAALLFP…IAGLLFDAIE (188 aa). 151 to 208 lines the ATP pocket; that stretch reads FVLAHGQAVLKPLDGMGGRSIFRSGTGDPNLNVILETLTDGGRKLTLAQRFIPDITAG. Residues Glu-282 and Asn-284 each contribute to the Mg(2+) site.

It belongs to the prokaryotic GSH synthase family. Requires Mg(2+) as cofactor. It depends on Mn(2+) as a cofactor.

It carries out the reaction gamma-L-glutamyl-L-cysteine + glycine + ATP = glutathione + ADP + phosphate + H(+). It participates in sulfur metabolism; glutathione biosynthesis; glutathione from L-cysteine and L-glutamate: step 2/2. This chain is Glutathione synthetase, found in Xanthomonas campestris pv. campestris (strain ATCC 33913 / DSM 3586 / NCPPB 528 / LMG 568 / P 25).